We begin with the raw amino-acid sequence, 126 residues long: Small ribosomal subunit protein uS13 (126 aa).

The disordered stretch occupies residues 92–126 (HRMGLPVRGQRTRTNARTRRGRRQTVAGKKKAPGK). Residues 101 to 126 (QRTRTNARTRRGRRQTVAGKKKAPGK) show a composition bias toward basic residues.

The protein belongs to the universal ribosomal protein uS13 family. In terms of assembly, part of the 30S ribosomal subunit. Forms a loose heterodimer with protein S19. Forms two bridges to the 50S subunit in the 70S ribosome.

In terms of biological role, located at the top of the head of the 30S subunit, it contacts several helices of the 16S rRNA. In the 70S ribosome it contacts the 23S rRNA (bridge B1a) and protein L5 of the 50S subunit (bridge B1b), connecting the 2 subunits; these bridges are implicated in subunit movement. Contacts the tRNAs in the A and P-sites. This chain is Small ribosomal subunit protein uS13, found in Nostoc punctiforme (strain ATCC 29133 / PCC 73102).